The following is a 330-amino-acid chain: Nodulation protein D 2 (330 aa).

In terms of domain architecture, HTH lysR-type spans 6–63 (LDLNLLVALDALITERNLSSAARKINLSQPAMSAAVARLRKHFRDELFGMRGRELVLS). Residues 23 to 42 (LSSAARKINLSQPAMSAAVA) constitute a DNA-binding region (H-T-H motif). The tract at residues 308–330 (RVTSSPEDAEPPGHFVRSVSPLP) is disordered.

Belongs to the LysR transcriptional regulatory family.

Functionally, nodD regulates the expression of the nodABCFE genes which encode other nodulation proteins. NodD is also a negative regulator of its own expression. Binds flavonoids as inducers. This is Nodulation protein D 2 (nodD2) from Bradyrhizobium diazoefficiens (strain JCM 10833 / BCRC 13528 / IAM 13628 / NBRC 14792 / USDA 110).